Here is a 116-residue protein sequence, read N- to C-terminus: Peptidyl-tRNA hydrolase (116 aa).

Belongs to the PTH2 family.

The protein localises to the cytoplasm. It carries out the reaction an N-acyl-L-alpha-aminoacyl-tRNA + H2O = an N-acyl-L-amino acid + a tRNA + H(+). Functionally, the natural substrate for this enzyme may be peptidyl-tRNAs which drop off the ribosome during protein synthesis. This Methanococcus maripaludis (strain C7 / ATCC BAA-1331) protein is Peptidyl-tRNA hydrolase.